We begin with the raw amino-acid sequence, 299 residues long: MIRRQKYGDEIAKAQVLIEALPYIKKFSGTTVVIKYGGSAMLDCNLKRMVMQDIVLMKFVGLNPIVVHGGGPEINKMLERLGIESKFVNGLRVTDEATMEIVEMVLTGRINKEIVSLINELGGQAIGVSGKDGRLLKAEKDTSNGDIGYVGKIVDVNIDVITMMLEKGYIPVIAPTSFGDDGKTYNVNADTAAGKIAEALKAEKLILLTDVEGILSNINDKSSLISRMDLEHAKEFMNSGRINGGMIPKLECCIKAVENGVKRAHIIDGRLTHSLLLEIFTDEGIGTMIGKECFDDDNL.

Substrate contacts are provided by residues G70–G71, R92, and N186.

Belongs to the acetylglutamate kinase family. ArgB subfamily.

It localises to the cytoplasm. The enzyme catalyses N-acetyl-L-glutamate + ATP = N-acetyl-L-glutamyl 5-phosphate + ADP. Its pathway is amino-acid biosynthesis; L-arginine biosynthesis; N(2)-acetyl-L-ornithine from L-glutamate: step 2/4. Its function is as follows. Catalyzes the ATP-dependent phosphorylation of N-acetyl-L-glutamate. This chain is Acetylglutamate kinase, found in Thermoanaerobacter sp. (strain X514).